A 417-amino-acid chain; its full sequence is Histidine--tRNA ligase (417 aa).

This sequence belongs to the class-II aminoacyl-tRNA synthetase family. In terms of assembly, homodimer.

The protein resides in the cytoplasm. The enzyme catalyses tRNA(His) + L-histidine + ATP = L-histidyl-tRNA(His) + AMP + diphosphate + H(+). In Nitratidesulfovibrio vulgaris (strain DP4) (Desulfovibrio vulgaris), this protein is Histidine--tRNA ligase.